The primary structure comprises 687 residues: Glycine--tRNA ligase beta subunit (687 aa).

It belongs to the class-II aminoacyl-tRNA synthetase family. Tetramer of two alpha and two beta subunits.

It localises to the cytoplasm. It catalyses the reaction tRNA(Gly) + glycine + ATP = glycyl-tRNA(Gly) + AMP + diphosphate. The polypeptide is Glycine--tRNA ligase beta subunit (Neisseria meningitidis serogroup A / serotype 4A (strain DSM 15465 / Z2491)).